Here is a 94-residue protein sequence, read N- to C-terminus: Acylphosphatase (94 aa).

Residues 8 to 94 (RLTAWVHGRV…REQITGFHER (87 aa)) enclose the Acylphosphatase-like domain. Residues arginine 23 and asparagine 41 contribute to the active site.

Belongs to the acylphosphatase family.

The enzyme catalyses an acyl phosphate + H2O = a carboxylate + phosphate + H(+). This Mycobacterium sp. (strain JLS) protein is Acylphosphatase (acyP).